The primary structure comprises 156 residues: Myosin regulatory light chain B, smooth adductor muscle (156 aa).

Ala1 is modified (blocked amino end (Ala)). EF-hand domains lie at 15–50 (KQIQ…LGRT) and 84–119 (DTEE…MGDN). Asp28, Asn30, Asp32, and Asp39 together coordinate Ca(2+).

Its function is as follows. In molluscan muscle, calcium regulation is associated with myosin rather than with actin. Muscle myosin contains two types of light chains: the catalytic light chain, essential for ATPase activity, and the regulatory light chain, a calcium-binding protein responsible for Ca(2+) dependent binding and Ca(2+) dependent Mg-ATPase activity. This is Myosin regulatory light chain B, smooth adductor muscle from Mizuhopecten yessoensis (Japanese scallop).